Reading from the N-terminus, the 205-residue chain is Small ribosomal subunit protein uS4 (205 aa).

Residues 1-16 (MSKRESSKYKIDRRMG) are compositionally biased toward basic and acidic residues. A disordered region spans residues 1–46 (MSKRESSKYKIDRRMGENIWGRPKSPVNRREYGPGQHGQRRKGKLS). Residues 94–157 (SRLDAIVYRA…KQLVIVLESV (64 aa)) enclose the S4 RNA-binding domain.

Belongs to the universal ribosomal protein uS4 family. As to quaternary structure, part of the 30S ribosomal subunit. Contacts protein S5. The interaction surface between S4 and S5 is involved in control of translational fidelity.

Its function is as follows. One of the primary rRNA binding proteins, it binds directly to 16S rRNA where it nucleates assembly of the body of the 30S subunit. Functionally, with S5 and S12 plays an important role in translational accuracy. The polypeptide is Small ribosomal subunit protein uS4 (Rhizobium rhizogenes (strain K84 / ATCC BAA-868) (Agrobacterium radiobacter)).